We begin with the raw amino-acid sequence, 567 residues long: Zinc finger protein 512 (567 aa).

Residues 1–34 (MSSRLGAVPATPGPTPFKQQRSTRIVGAKNSRTQ) are disordered. Glycyl lysine isopeptide (Lys-Gly) (interchain with G-Cter in SUMO2) cross-links involve residues Lys18 and Lys84. Positions 87-148 (AASHVEGPGG…QTRRIRKEPP (62 aa)) are disordered. Residues 119–130 (KKHKLYGRKQRP) are compositionally biased toward basic residues. A C2H2-type 1 zinc finger spans residues 197–220 (FTCHHCGKQLRSLAGMKYHVMANH). Lys227 participates in a covalent cross-link: Glycyl lysine isopeptide (Lys-Gly) (interchain with G-Cter in SUMO2). Residues 287-310 (LKCHHCGKPYRSKAGLAYHLRSEH) form a C2H2-type 2 zinc finger. Lys333 participates in a covalent cross-link: Glycyl lysine isopeptide (Lys-Gly) (interchain with G-Cter in SUMO2). The C2H2-type 3; atypical zinc finger occupies 406-430 (IQCPNQGCEAVYSSVSGLKAHLGSC). A C2H2-type 3 zinc finger spans residues 440 to 463 (YKCLLCQKEFVSESGVKYHINSVH). Residues 485-494 (KQRQQEEEKR) are compositionally biased toward basic and acidic residues. A disordered region spans residues 485-567 (KQRQQEEEKR…PKTNHKRGKK (83 aa)). Basic residues predominate over residues 495–508 (RQQHRSRRSLRRRQ). Residues 523–544 (VGKDQRRNHEELLVATSRKEPE) show a composition bias toward basic and acidic residues. Residues 556-567 (RSPKTNHKRGKK) show a composition bias toward basic residues.

It belongs to the krueppel C2H2-type zinc-finger protein family.

It localises to the nucleus. Its function is as follows. May be involved in transcriptional regulation. This Bos taurus (Bovine) protein is Zinc finger protein 512 (ZNF512).